Here is a 370-residue protein sequence, read N- to C-terminus: Dual-specificity RNA methyltransferase RlmN (370 aa).

Glutamate 93 (proton acceptor) is an active-site residue. The region spanning 99-337 (EEGRGTLCVS…VTTVRKTRGD (239 aa)) is the Radical SAM core domain. An intrachain disulfide couples cysteine 106 to cysteine 343. Cysteine 113, cysteine 117, and cysteine 120 together coordinate [4Fe-4S] cluster. S-adenosyl-L-methionine is bound by residues 167 to 168 (GE), serine 199, 221 to 223 (SLH), and asparagine 300. Cysteine 343 (S-methylcysteine intermediate) is an active-site residue.

This sequence belongs to the radical SAM superfamily. RlmN family. The cofactor is [4Fe-4S] cluster.

The protein resides in the cytoplasm. The enzyme catalyses adenosine(2503) in 23S rRNA + 2 reduced [2Fe-2S]-[ferredoxin] + 2 S-adenosyl-L-methionine = 2-methyladenosine(2503) in 23S rRNA + 5'-deoxyadenosine + L-methionine + 2 oxidized [2Fe-2S]-[ferredoxin] + S-adenosyl-L-homocysteine. It catalyses the reaction adenosine(37) in tRNA + 2 reduced [2Fe-2S]-[ferredoxin] + 2 S-adenosyl-L-methionine = 2-methyladenosine(37) in tRNA + 5'-deoxyadenosine + L-methionine + 2 oxidized [2Fe-2S]-[ferredoxin] + S-adenosyl-L-homocysteine. Its function is as follows. Specifically methylates position 2 of adenine 2503 in 23S rRNA and position 2 of adenine 37 in tRNAs. m2A2503 modification seems to play a crucial role in the proofreading step occurring at the peptidyl transferase center and thus would serve to optimize ribosomal fidelity. The chain is Dual-specificity RNA methyltransferase RlmN from Francisella tularensis subsp. holarctica (strain LVS).